Reading from the N-terminus, the 217-residue chain is Uracil-DNA glycosylase (217 aa).

Asp-62 serves as the catalytic Proton acceptor.

It belongs to the uracil-DNA glycosylase (UDG) superfamily. UNG family.

It localises to the cytoplasm. The catalysed reaction is Hydrolyzes single-stranded DNA or mismatched double-stranded DNA and polynucleotides, releasing free uracil.. Its function is as follows. Excises uracil residues from the DNA which can arise as a result of misincorporation of dUMP residues by DNA polymerase or due to deamination of cytosine. This is Uracil-DNA glycosylase from Streptococcus pyogenes serotype M18 (strain MGAS8232).